The sequence spans 735 residues: Polycomb protein sop-2 (735 aa).

A compositionally biased stretch (polar residues) spans 1 to 15 (MSSNLTSNEMSSTSA). Disordered stretches follow at residues 1 to 59 (MSSN…SSSS), 223 to 288 (AARS…APAA), and 300 to 534 (PQES…PVLQ). The interval 224-503 (ARSSRMAARR…APATPATPAS (280 aa)) is RNA-binding. Residues 239 to 288 (YRGAFRGAARGAPSRRPAPAAEVAPETPVAAPMAPAAPAAPATPEAAPAA) show a composition bias toward low complexity. Basic and acidic residues-rich tracts occupy residues 317–355 (DTSK…DGGR) and 389–398 (RAAEKKKPED). A compositionally biased stretch (acidic residues) spans 399–413 (SDAAEEQEVEMEVDN). Basic and acidic residues predominate over residues 450–470 (VEPKKEPVDEPAEKIPKRSEA). Over residues 471–504 (APEVPATATTKEAPPSTSSSPPDAPATPATPASS) the composition is skewed to low complexity. Positions 520 to 534 (LTGSPPESETPPVLQ) are enriched in polar residues. Positions 621–712 (LVENNHEATL…YGTEVLNHYR (92 aa)) are SAM-like.

As to quaternary structure, homodimer. Interacts with ubc-9. Binds through its N-terminal region to the N-terminal region of sor-1. Post-translationally, sumoylated by ubc-9. Sumoylation is required for the transcriptional regulation of homeotic genes. As to expression, widely expressed. Weakly expressed in most somatic cells of 50-cell stage embryos. At 200 cell stage, it is strongly expressed. By comma stage, it is expressed in most somatic cells.

It is found in the nucleus. In terms of biological role, polycomb group (PcG) protein. PcG proteins act by forming multiprotein complexes, which are required to maintain the transcriptionally repressive state of homeotic genes throughout development. PcG proteins are not required to initiate repression, but to maintain it during later stages of development. Also required to repress expression of other genes and for localization of sor-1. Binds RNA. This Caenorhabditis elegans protein is Polycomb protein sop-2 (sop-2).